We begin with the raw amino-acid sequence, 37 residues long: ACVPVYKECWYPQKPCCEDRVCQCSFGMTNCKCKARL.

4 disulfide bridges follow: C2-C17, C9-C22, C16-C33, and C24-C31.

Expressed by the venom gland.

It is found in the secreted. In terms of biological role, antagonist of L-type calcium channels (Cav1/CACNA1). In Ctenus ornatus (Brazilian spider), this protein is U10-ctenitoxin-Co1a.